A 266-amino-acid polypeptide reads, in one-letter code: Isopentenyl phosphate kinase (266 aa).

5 to 9 (KLGGS) is an ATP binding site. Position 47 (alanine 47) interacts with substrate. Glycine 48 is a binding site for ATP. Substrate contacts are provided by histidine 52 and glycine 157. ATP contacts are provided by residues aspartate 178, 183–188 (YTRNPK), glycine 219, and lysine 223.

It belongs to the isopentenyl phosphate kinase family. Homodimer.

It catalyses the reaction isopentenyl phosphate + ATP = isopentenyl diphosphate + ADP. Its function is as follows. Catalyzes the formation of isopentenyl diphosphate (IPP), the building block of all isoprenoids. Has lower activity with dimethylallyl phosphate (DMAP) and isopentenyl thiolophosphate (ISP). Has low activity with 1-butyl phosphate (BP) and 3-buten-1-yl phosphate (BEP). Has no significant activity with geranyl phosphate (in vitro). This is Isopentenyl phosphate kinase from Methanothermobacter thermautotrophicus (strain ATCC 29096 / DSM 1053 / JCM 10044 / NBRC 100330 / Delta H) (Methanobacterium thermoautotrophicum).